Here is a 387-residue protein sequence, read N- to C-terminus: Major outer membrane protein P.IA (387 aa).

An N-terminal signal peptide occupies residues 1 to 19 (MRKKLTALVLSALPLAAVA).

Belongs to the Gram-negative porin family. As to quaternary structure, homotrimer.

It localises to the cell outer membrane. Functionally, serves as a slightly cation selective porin. Major antigen on the gonococcal cell surface and it may have pathogenic properties in addition to its porin activity. In Neisseria meningitidis serogroup C, this protein is Major outer membrane protein P.IA (porA).